Consider the following 491-residue polypeptide: MSALLSESDLNDFISPALACVKPTQVSGGKKDNVNMNGEYEVSTEPDQLEKVSITLSDCLACSGCITSSEEILLSSQSHSVFLKNWGKLSQQQDKFLVVSVSPQCRLSLAQYYGLTLEAADLCLMNFFQKHFQCKYVVGTEMGRIISISKTVEKIIAHKKQKENTGADRKPLLSAVCPGFLIYTEKTKPQLAPMLLNVKSPQQITGSLIRATFESLAIARESFYHLSLMPCFDKKLEASRPESLGDGIDCVITPREIVTMLQELNLDFKSFLTEDTSLYGRLSPPGWDPRVHWASNLGGTCGGYAYQYVTAVQRLHPGSQMIVLEGRNSDIVEYRLLHDDRIIAAASELSGFRNIQNLVRKLTSGSGSERKRNITALRKRRTGPKANSREMAAVAAATADPYHSDYIEVNACPGACMNGGGLLNGEQNSLKRKQLVQTLNKRHGEELAMVDPLTLGPKLEEAAARPLSLEYVFAPVKQAVEKDLVSVGSTW.

[4Fe-4S] cluster is bound by residues cysteine 20, cysteine 59, cysteine 62, cysteine 65, cysteine 177, cysteine 231, cysteine 412, and cysteine 416.

It belongs to the NARF family. As to quaternary structure, interacts with CIA1.

Its function is as follows. Component of the cytosolic Fe/S protein assembly machinery. Required for maturation of extramitochondrial Fe/S proteins. May play a role in the transfer of pre-assembled Fe/S clusters to target apoproteins. The chain is Cytosolic Fe-S cluster assembly factor NAR1 (NAR1) from Saccharomyces cerevisiae (strain YJM789) (Baker's yeast).